The chain runs to 104 residues: Putative heat shock protein PS1 (104 aa).

N-linked (GlcNAc...) asparagine glycosylation is found at asparagine 11 and asparagine 18. Residue asparagine 18 participates in ATP binding.

This sequence belongs to the heat shock protein 90 family. As to quaternary structure, homodimer.

The protein localises to the cytoplasm. Its function is as follows. Putative molecular chaperone that may promote the maturation, structural maintenance and proper regulation of specific target proteins. The protein is Putative heat shock protein PS1 of Pinus strobus (Eastern white pine).